The following is a 446-amino-acid chain: Plant intracellular Ras-group-related LRR protein 3 (446 aa).

The stretch at 65–100 (EACRAVVRLEETHDAYEALLQEAEGRLEAVYRSAME) forms a coiled coil. The disordered stretch occupies residues 101–121 (GKDLEEPDGRDESAAAAAGDD). LRR repeat units lie at residues 138–160 (GKPVESVRLVDRQLRHLPEAFGR), 161–184 (IQGLRVLDVSRNQLEVIPDAIGGL), 185–207 (DHLEELRLASNALISLPDSIGLL), 208–230 (LNLRILNVGSNRLRSLPDSISKC), 232–254 (SLIELDASYNGLAYLPTNIGYEL), 255–277 (VNLRKLWVHMNKLRSLPSSICEM), 279–300 (SLYLLDAHFNELCGLPSAIGKL), 301–324 (SSLEILNLSSNFSDLKDLPASFGD), 325–347 (LLNLRELDLSNNQIHALPDNFGR), and 349–371 (DKLEKLNLEQNPLSMPPMEIVNK). The GVYW motif lies at 372–384 (GVDAVKEYMLQRW).

This sequence belongs to the SHOC2 family. Widely expressed.

Leucine-rich repeat protein that likely mediates protein interactions, possibly in the context of signal transduction. In Oryza sativa subsp. japonica (Rice), this protein is Plant intracellular Ras-group-related LRR protein 3 (IRL3).